Consider the following 1041-residue polypeptide: Serine-repeat antigen protein 6 (1041 aa).

An N-terminal signal peptide occupies residues 1–34 (MIFFNFKLNRMICPIFFLYIINVLFTQYFIKCEG). The N-linked (GlcNAc...) asparagine glycan is linked to Asn84. Residues 101–111 (KVVSSSESGKG) show a composition bias toward low complexity. A disordered region spans residues 101–173 (KVVSSSESGK…TESSSETLNK (73 aa)). A compositionally biased stretch (polar residues) spans 114 to 149 (VSHTKVTSEGLSDTQPNVTQSVSSSTHTPGSLDSTM). Asn130 carries an N-linked (GlcNAc...) asparagine glycan. Positions 150 to 168 (STEQHSSVSQSSLPTESSS) are enriched in low complexity. Asn459 carries N-linked (GlcNAc...) asparagine glycosylation. The disordered stretch occupies residues 500-577 (TLPSESPSES…GDTNYVYDFD (78 aa)). Positions 502–515 (PSESPSESSSKSDS) are enriched in low complexity. Over residues 521–545 (NDKDKNEDKDDMSKNSKEEFKNDDK) the composition is skewed to basic and acidic residues. Asn554 is a glycosylation site (N-linked (GlcNAc...) asparagine). The segment covering 564 to 574 (NINNGDTNYVY) has biased composition (low complexity). Asn583 is a glycosylation site (N-linked (GlcNAc...) asparagine). Residue Cys654 is part of the active site. Asn684 is a glycosylation site (N-linked (GlcNAc...) asparagine). Active-site residues include His820 and Asn845. N-linked (GlcNAc...) asparagine glycosylation is present at Asn984.

This sequence belongs to the peptidase C1 family. Just prior to merozoite egress from host erythrocytes, proteolytically cleaved by SUB1 to generate the active 75kDa form.

The protein localises to the parasitophorous vacuole lumen. It localises to the parasitophorous vacuole membrane. Functionally, cysteine protease which plays an essential role in merozoite egress from host erythrocytes. May cleave host SPTB/beta spectrin and ANK1/ankyrin-1 which disrupts host erythrocyte actin cytoskeleton and leads to host erythrocyte cell membrane rupture. The chain is Serine-repeat antigen protein 6 from Plasmodium falciparum.